Here is a 70-residue protein sequence, read N- to C-terminus: Large ribosomal subunit protein bL28c (70 aa).

This sequence belongs to the bacterial ribosomal protein bL28 family.

It localises to the plastid. Its subcellular location is the cyanelle. The chain is Large ribosomal subunit protein bL28c (rpl28) from Cyanophora paradoxa.